Reading from the N-terminus, the 503-residue chain is AMP phosphorylase (503 aa).

Residues Gly168, 194–199 (SRAITS), and Thr203 contribute to the AMP site. The active-site Proton donor is the Asp256. AMP-binding residues include Ser264 and Lys288.

Belongs to the thymidine/pyrimidine-nucleoside phosphorylase family. Type 2 subfamily.

The enzyme catalyses AMP + phosphate = alpha-D-ribose 1,5-bisphosphate + adenine. The catalysed reaction is CMP + phosphate = cytosine + alpha-D-ribose 1,5-bisphosphate. It carries out the reaction UMP + phosphate = alpha-D-ribose 1,5-bisphosphate + uracil. Functionally, catalyzes the conversion of AMP and phosphate to adenine and ribose 1,5-bisphosphate (R15P). Exhibits phosphorylase activity toward CMP and UMP in addition to AMP. Functions in an archaeal AMP degradation pathway, together with R15P isomerase and RubisCO. This chain is AMP phosphorylase, found in Pyrococcus furiosus (strain ATCC 43587 / DSM 3638 / JCM 8422 / Vc1).